The following is a 171-amino-acid chain: Cytochrome c oxidase subunit 5b-2, mitochondrial (171 aa).

Residues 1–54 (MWRRIVSSHLKSISAVGSCAAPSCRHAVVESTHLSLSTRASSIPAYSSIFSRLI) constitute a mitochondrion transit peptide. Zn(2+) contacts are provided by C121, C145, and C148.

It belongs to the cytochrome c oxidase subunit 5B (TC 3.D.4.11) family.

Its subcellular location is the mitochondrion inner membrane. This protein is one of the nuclear-coded polypeptide chains of cytochrome c oxidase, the terminal oxidase in mitochondrial electron transport. This Arabidopsis thaliana (Mouse-ear cress) protein is Cytochrome c oxidase subunit 5b-2, mitochondrial (COX5B-2).